A 464-amino-acid chain; its full sequence is MSTDKTNQSWGGRFSEPVDAFVARFTASVEFDKRLYRHDIMGSIAHATMLAKAGVLTDAERDQIIANLKDIQSEIEAGTFDWRVDLEDVHMNIEARLTDRIGIVGKKLHTGRSRNDQVATDIRLWLRDEIDVILGEITRLQQGLLGLAEAEADTIMPGFTHLQTAQPVTFGHHLLAWFEMLSRDYERLVDCRKRTNRMPLGSAALAGTTYPIQREITCELLGFEAISGNSLDGVSDRDFAIEFCAAASVAMMHLSRFSEELVLWTSAQFQFIDLPDRFCTGSSIMPQKKNPDVPELVRGKTGRVFGALTGLLALMKGQPLAYNKDNQEDKEPLFDAADTLRDSLRAFADMVPAIKPKREIMREAALRGFSTATDLADYLVRKGLPFRDCHEIVGHAVKYGVQTGKDLAEMTLDELRQFSGEIGDDVFAVLTLEGSVNARDHIGGTAPAQVRAAVKRGQALLAGR.

The protein belongs to the lyase 1 family. Argininosuccinate lyase subfamily.

It localises to the cytoplasm. The catalysed reaction is 2-(N(omega)-L-arginino)succinate = fumarate + L-arginine. It functions in the pathway amino-acid biosynthesis; L-arginine biosynthesis; L-arginine from L-ornithine and carbamoyl phosphate: step 3/3. In Stutzerimonas stutzeri (strain A1501) (Pseudomonas stutzeri), this protein is Argininosuccinate lyase.